Here is a 394-residue protein sequence, read N- to C-terminus: Elongation factor Tu 2 (394 aa).

In terms of domain architecture, tr-type G spans lysine 10–glutamate 204. The G1 stretch occupies residues glycine 19–threonine 26. Residue glycine 19 to threonine 26 coordinates GTP. Threonine 26 contacts Mg(2+). Residues glycine 60–asparagine 64 are G2. The segment at aspartate 81–glycine 84 is G3. GTP contacts are provided by residues aspartate 81–histidine 85 and asparagine 136–aspartate 139. The segment at asparagine 136–aspartate 139 is G4. Residues serine 174–leucine 176 are G5.

Belongs to the TRAFAC class translation factor GTPase superfamily. Classic translation factor GTPase family. EF-Tu/EF-1A subfamily. Monomer.

Its subcellular location is the cytoplasm. The enzyme catalyses GTP + H2O = GDP + phosphate + H(+). Its function is as follows. GTP hydrolase that promotes the GTP-dependent binding of aminoacyl-tRNA to the A-site of ribosomes during protein biosynthesis. This Escherichia coli O139:H28 (strain E24377A / ETEC) protein is Elongation factor Tu 2.